The chain runs to 364 residues: Geissoschizine synthase (364 aa).

Position 51 (C51) interacts with Zn(2+). N52 contributes to the NADP(+) binding site. The Zn(2+) site is built by H73, E74, C104, C107, C110, C118, and C168. L194, G196, L197, S216, T217, S218, K221, R261, V280, A282, S304, T306, and R351 together coordinate NADP(+).

The protein belongs to the zinc-containing alcohol dehydrogenase family. Class-III subfamily. In terms of assembly, homodimer. Requires Zn(2+) as cofactor. In terms of tissue distribution, expressed in leaf epidermis.

The catalysed reaction is (19E)-geissoschizine + NADP(+) = 4,21-dehydrogeissoschizine + NADPH. It participates in alkaloid biosynthesis. Its function is as follows. Component of the seco-iridoid and derivatives monoterpenoid indole alkaloids (MIAs, e.g. catharanthine, tabersonine, vincadifformine, vindoline, vincristine, quinine and strychnine) biosynthesis pathway. During the conversion of strictosidine aglycone to geissoschizine, catalyzes iminium reduction on 4,21-dehydrogeissoschizine to produce 19E-geissoschizine, precursor of catharanthine and tabersonine derivatives. May also trigger the production of reactive intermediate used by the HL1, HL2, HL3 and HL4 to form catharanthine, vincadifformine and tabersonine. This is Geissoschizine synthase from Catharanthus roseus (Madagascar periwinkle).